Here is a 365-residue protein sequence, read N- to C-terminus: MGKVNEVLFMNRGEGEISYAQNSAFTQKVASMAMPALENAVETLFSKDFHLLQALTAADLGCAAGPNTFAVISTIKRMMEKKCRELYCQTLELQVYLNDLFGNDFNTLFKGLSSQVVGNKCEEVSCYVMGVPGSFHGRLFPRNSLHLVHSSYSVHWLTQAPKGLTSREGLALNKGKIYISKTSPPVVKKAYLSQFHEDFTMFLNARSQEVVPNGCMVLILHGRQSSDPSEMESCFTWELLAIAIAELVSQGLIDKDKLDTFNVPSYWPSLEEVKDIVERDGSFTIDHLEGFELDSLEMQEDDKWVRGDKFAKMVRAFTEPIISNQFGQEIMDKLYDKFTHILVSDLEAELPKTTSIILVLSKIVG.

An S-adenosyl-L-homocysteine-binding site is contributed by Y19. T26 is a binding site for caffeine. Positions 62, 67, 99, 100, 134, and 135 each coordinate S-adenosyl-L-homocysteine. Y152, H155, and W156 together coordinate caffeine. N173 contributes to the Mg(2+) binding site. H221 provides a ligand contact to caffeine. 3 residues coordinate Mg(2+): D259, F261, and N262. F317 provides a ligand contact to caffeine.

Belongs to the methyltransferase superfamily. Type-7 methyltransferase family. Mg(2+) is required as a cofactor.

The catalysed reaction is 1,7-dimethylxanthine + S-adenosyl-L-methionine = caffeine + S-adenosyl-L-homocysteine + H(+). The enzyme catalyses 7-methylxanthine + S-adenosyl-L-methionine = theobromine + S-adenosyl-L-homocysteine + H(+). It participates in alkaloid biosynthesis. Involved in the biosynthesis of caffeine. Catalyzes the conversion of 7-methylxanthine (7mX) to theobromine, and, to some extent, the conversion of paraxanthine to caffeine, but seems not able to convert theobromine to caffeine. The chain is 7-methylxanthine methyltransferase PCS1 from Camellia ptilophylla (Cocoa tea).